The following is a 254-amino-acid chain: Small ribosomal subunit protein uS2 (254 aa).

It belongs to the universal ribosomal protein uS2 family.

The sequence is that of Small ribosomal subunit protein uS2 from Borrelia recurrentis (strain A1).